The primary structure comprises 88 residues: uncharacterized protein (88 aa).

The interval 1–31 is disordered; it reads MIPRDPRSPAPDLSAINQPAGRAERRSGPAT.

This is an uncharacterized protein from Escherichia coli.